A 116-amino-acid chain; its full sequence is Tyrosine-protein phosphatase 20 (116 aa).

The 116-residue stretch at 1–116 (WMMIVEQKCR…EIGGDAPMVV (116 aa)) folds into the Tyrosine-protein phosphatase domain. Residue aspartate 84 coordinates substrate.

The protein belongs to the protein-tyrosine phosphatase family.

It carries out the reaction O-phospho-L-tyrosyl-[protein] + H2O = L-tyrosyl-[protein] + phosphate. In Styela plicata (Wrinkled sea squirt), this protein is Tyrosine-protein phosphatase 20 (STY-20).